A 253-amino-acid polypeptide reads, in one-letter code: Demethylmenaquinone methyltransferase (253 aa).

S-adenosyl-L-methionine is bound by residues T62, D80, D102–A103, and S119.

The protein belongs to the class I-like SAM-binding methyltransferase superfamily. MenG/UbiE family.

It carries out the reaction a 2-demethylmenaquinol + S-adenosyl-L-methionine = a menaquinol + S-adenosyl-L-homocysteine + H(+). It participates in quinol/quinone metabolism; menaquinone biosynthesis; menaquinol from 1,4-dihydroxy-2-naphthoate: step 2/2. In terms of biological role, methyltransferase required for the conversion of demethylmenaquinol (DMKH2) to menaquinol (MKH2). This Paenarthrobacter aurescens (strain TC1) protein is Demethylmenaquinone methyltransferase.